The sequence spans 2053 residues: Integrator complex subunit 1 (2053 aa).

2 disordered regions span residues 36 to 58 (KILP…ALAS) and 249 to 285 (SLPS…ESEP). The span at 268–283 (DNSTQSLDASPLNTES) shows a compositional bias: polar residues. A helical membrane pass occupies residues 708 to 728 (LAIIAFYWKAWLILLMISAHN).

The protein belongs to the Integrator subunit 1 family. In terms of assembly, belongs to the multiprotein complex Integrator, at least composed of IntS1, IntS2, IntS3, IntS4, omd/IntS5, IntS6, defl/IntS7, IntS8, IntS9, IntS10, IntS11, IntS12, asun/IntS13, IntS14 and IntS15. The core complex associates with protein phosphatase 2A subunits mts/PP2A and Pp2A-29B, to form the Integrator-PP2A (INTAC) complex. Within the complex, interacts with IntS12 and IntS9. Interaction with IntS12 is likely to be important for promoting 3'-end processing of snRNAs. Interacts with Mediator complex members Cdk8 and CycC.

Its subcellular location is the nucleus membrane. It localises to the nucleus. In terms of biological role, component of the integrator complex, a multiprotein complex that terminates RNA polymerase II (Pol II) transcription in the promoter-proximal region of genes. The integrator complex provides a quality checkpoint during transcription elongation by driving premature transcription termination of transcripts that are unfavorably configured for transcriptional elongation: the complex terminates transcription by (1) catalyzing dephosphorylation of the C-terminal domain (CTD) of Pol II subunit Polr2A/Rbp1 and Spt5, and (2) degrading the exiting nascent RNA transcript via endonuclease activity. The integrator complex is also involved in the 3'-end processing of the U7 snRNA, and also the spliceosomal snRNAs U1, U2, U4 and U5. Required for the normal expression of the Integrator complex component IntS12. The polypeptide is Integrator complex subunit 1 (Drosophila melanogaster (Fruit fly)).